A 247-amino-acid chain; its full sequence is Ribonuclease 3 (247 aa).

Residues 21–149 form the RNase III domain; sequence FKKLSKKIGI…LVGAIYLDRG (129 aa). A Mg(2+)-binding site is contributed by Glu62. Residue Asp66 is part of the active site. 2 residues coordinate Mg(2+): Asn135 and Glu138. Residue Glu138 is part of the active site. In terms of domain architecture, DRBM spans 176–245; it reads DYKTQLQEYS…AKELYIRIRR (70 aa).

The protein belongs to the ribonuclease III family. As to quaternary structure, homodimer. Mg(2+) serves as cofactor.

Its subcellular location is the cytoplasm. It catalyses the reaction Endonucleolytic cleavage to 5'-phosphomonoester.. Its function is as follows. Digests double-stranded RNA. Involved in the processing of primary rRNA transcript to yield the immediate precursors to the large and small rRNAs (23S and 16S). Processes some mRNAs, and tRNAs when they are encoded in the rRNA operon. Processes pre-crRNA and tracrRNA of type II CRISPR loci if present in the organism. This is Ribonuclease 3 from Leptospira borgpetersenii serovar Hardjo-bovis (strain L550).